A 562-amino-acid polypeptide reads, in one-letter code: Formate--tetrahydrofolate ligase (562 aa).

ATP is bound at residue 71 to 78; it reads TPAGEGKS.

The protein belongs to the formate--tetrahydrofolate ligase family.

It catalyses the reaction (6S)-5,6,7,8-tetrahydrofolate + formate + ATP = (6R)-10-formyltetrahydrofolate + ADP + phosphate. It participates in one-carbon metabolism; tetrahydrofolate interconversion. The protein is Formate--tetrahydrofolate ligase of Bacillus cereus (strain ATCC 14579 / DSM 31 / CCUG 7414 / JCM 2152 / NBRC 15305 / NCIMB 9373 / NCTC 2599 / NRRL B-3711).